The chain runs to 545 residues: Sphingomyelin phosphodiesterase 5 (545 aa).

A mitochondrion-targeting transit peptide spans 1–35 (MSLRESPFPNGFLEGLHAVGWGLIFPCFWFLDRLI). Residues 36–64 (AVCISTTLERMWRLEQECYLHPLKVVFGS) lie on the Mitochondrial matrix side of the membrane. Residues 65–85 (ILFFILFVISTPFALLGFILW) traverse the membrane as a helical; Signal-anchor for type II membrane protein segment. Over 86-545 (APLQAIRRPF…LSVSLDSEQN (460 aa)) the chain is Mitochondrial intermembrane. Glutamate 258 provides a ligand contact to Mg(2+). Catalysis depends on histidine 529, which acts as the Proton acceptor.

It belongs to the neutral sphingomyelinase family. Mg(2+) is required as a cofactor. The cofactor is Mn(2+).

It localises to the mitochondrion inner membrane. It is found in the endoplasmic reticulum membrane. The catalysed reaction is a sphingomyelin + H2O = phosphocholine + an N-acylsphing-4-enine + H(+). It catalyses the reaction N-(hexadecanoyl)-sphing-4-enine-1-phosphocholine + H2O = N-hexadecanoylsphing-4-enine + phosphocholine + H(+). The protein operates within lipid metabolism; sphingolipid metabolism. Its activity is regulated as follows. Activated by the phospholipids cardiolipin, phosphatidylserine, and phosphatidylethanolamine. Strongest activation with cardiolipin. Functionally, catalyzes the hydrolysis of membrane sphingomyelin to form phosphorylcholine and ceramide. The chain is Sphingomyelin phosphodiesterase 5 from Danio rerio (Zebrafish).